A 135-amino-acid chain; its full sequence is Photosystem II extrinsic protein U (135 aa).

Residues 1–29 (MKRLLSWLTGALLMAGLLAGLILPGSVHA) form the signal peptide.

The protein belongs to the PsbU family. As to quaternary structure, PSII is composed of 1 copy each of membrane proteins PsbA, PsbB, PsbC, PsbD, PsbE, PsbF, PsbH, PsbI, PsbJ, PsbK, PsbL, PsbM, PsbT, PsbX, PsbY, Psb30/Ycf12, peripheral proteins PsbO, CyanoQ (PsbQ), PsbU, PsbV and a large number of cofactors. It forms dimeric complexes.

Its subcellular location is the cellular thylakoid membrane. In terms of biological role, one of the extrinsic, lumenal subunits of photosystem II (PSII). PSII is a light-driven water plastoquinone oxidoreductase, using light energy to abstract electrons from H(2)O, generating a proton gradient subsequently used for ATP formation. The extrinsic proteins stabilize the structure of photosystem II oxygen-evolving complex (OEC), the ion environment of oxygen evolution and protect the OEC against heat-induced inactivation. The protein is Photosystem II extrinsic protein U of Parasynechococcus marenigrum (strain WH8102).